We begin with the raw amino-acid sequence, 179 residues long: Laminin-binding fimbrial subunit ElfA (179 aa).

An N-terminal signal peptide occupies residues 1-21 (MKKSVLTAFITVVCATSSVMA).

The protein belongs to the fimbrial protein family.

It localises to the fimbrium. In terms of biological role, part of the elfADCG fimbrial operon, which could be required for adherence to host epithelial cells. ElfA is an accessory colonization factor that contributes to adherence of bacteria to human intestinal epithelial cells and to animal intestinal tissue in vitro. Binds specifically to laminin, but not to fibronectin or collagen type IV. The protein is Laminin-binding fimbrial subunit ElfA (elfA) of Escherichia coli O157:H7.